The sequence spans 377 residues: Chorismate synthase (377 aa).

Positions 48 and 54 each coordinate NADP(+). FMN contacts are provided by residues 125 to 127 (RSS), 238 to 239 (NA), glycine 278, 293 to 297 (KPTSS), and arginine 319.

This sequence belongs to the chorismate synthase family. Homotetramer. The cofactor is FMNH2.

It carries out the reaction 5-O-(1-carboxyvinyl)-3-phosphoshikimate = chorismate + phosphate. Its pathway is metabolic intermediate biosynthesis; chorismate biosynthesis; chorismate from D-erythrose 4-phosphate and phosphoenolpyruvate: step 7/7. Catalyzes the anti-1,4-elimination of the C-3 phosphate and the C-6 proR hydrogen from 5-enolpyruvylshikimate-3-phosphate (EPSP) to yield chorismate, which is the branch point compound that serves as the starting substrate for the three terminal pathways of aromatic amino acid biosynthesis. This reaction introduces a second double bond into the aromatic ring system. The polypeptide is Chorismate synthase (Aromatoleum aromaticum (strain DSM 19018 / LMG 30748 / EbN1) (Azoarcus sp. (strain EbN1))).